Consider the following 253-residue polypeptide: Ice-binding protein (253 aa).

The signal sequence occupies residues 1-27 (MKTLISNSKKVLIPLIMGSIFAGNVMA). The cysteines at positions 75 and 93 are disulfide-linked. 2 consecutive short sequence motifs (ice-binding site motif (T-A/G-X-T/N)) follow at residues 220-223 (TGTT) and 232-235 (TAVT).

This sequence belongs to the ice-binding protein family.

Its subcellular location is the secreted. In terms of biological role, binds to the surface of ice crystals and inhibits their growth. Has ice recrystallization inhibition (RI) activity (the ability to prevent the formation of larger grains of ice at the expense of smaller grains), which may protect membranes from freezing injury. Has high thermal hysteresis (TH) activity, which is the ability to lower the freezing point of an aqueous solution below its melting point, and thus the freezing of the cell fluid can be prevented protecting the organism from ice damage. The TH activity of this protein is 3.8 degrees Celsius at 14 mM. The protein is Ice-binding protein of Colwellia sp.